A 92-amino-acid polypeptide reads, in one-letter code: Small ribosomal subunit protein bS20 (92 aa).

The protein belongs to the bacterial ribosomal protein bS20 family.

Functionally, binds directly to 16S ribosomal RNA. This chain is Small ribosomal subunit protein bS20, found in Rickettsia africae (strain ESF-5).